Here is a 92-residue protein sequence, read N- to C-terminus: uncharacterized protein (92 aa).

Residues 25–53 form a disordered region; that stretch reads AGRGVRREARDTPCRGTAEGLATSQPEDG.

This is an uncharacterized protein from Treponema pallidum (strain Nichols).